Consider the following 216-residue polypeptide: Protein Syd (216 aa).

The protein belongs to the Syd family.

It is found in the cell inner membrane. Functionally, interacts with the SecY protein in vivo. May bind preferentially to an uncomplexed state of SecY, thus functioning either as a chelating agent for excess SecY in the cell or as a regulatory factor that negatively controls the translocase function. In Shewanella baltica (strain OS223), this protein is Protein Syd.